The primary structure comprises 593 residues: Mitoguardin 2 (593 aa).

Transmembrane regions (helical) follow at residues 11–31 and 42–62; these read MIQA…TTFG and PGLR…ALAA. Disordered stretches follow at residues 103 to 141 and 196 to 231; these read GYSS…VASM and SVGQ…SQRK. Low complexity-rich tracts occupy residues 106–116 and 123–141; these read SRRVQSPSSKS and ISSI…VASM. Ser132 is subject to Phosphoserine. A Phosphothreonine modification is found at Thr206. 3 positions are modified to phosphoserine: Ser220, Ser224, and Ser228. Residue Thr273 is modified to Phosphothreonine. 2 positions are modified to phosphoserine: Ser276 and Ser295. Positions 292-298 match the FFAT motif; that stretch reads SFFSATE.

Belongs to the mitoguardin family. Homodimer and heterodimer; forms heterodimers with MIGA1. Interacts with PLD6/MitoPLD. Interacts (via phosphorylated FFAT motif) with MOSPD2, VAPA and VAPB. Post-translationally, phosphorylation at Ser-295 of the FFAT motif activates interaction with MOSPD2, VAPA and VAPB.

It is found in the mitochondrion outer membrane. Regulator of mitochondrial fusion: acts by forming homo- and heterodimers at the mitochondrial outer membrane and facilitating the formation of PLD6/MitoPLD dimers. May act by regulating phospholipid metabolism via PLD6/MitoPLD. The sequence is that of Mitoguardin 2 from Homo sapiens (Human).